Reading from the N-terminus, the 218-residue chain is Ribosome maturation factor RimM (218 aa).

Residues 141–214 (GELWWDRDLV…HIVVDPPPGL (74 aa)) form the PRC barrel domain.

It belongs to the RimM family. In terms of assembly, binds ribosomal protein uS19.

Its subcellular location is the cytoplasm. Functionally, an accessory protein needed during the final step in the assembly of 30S ribosomal subunit, possibly for assembly of the head region. Essential for efficient processing of 16S rRNA. May be needed both before and after RbfA during the maturation of 16S rRNA. It has affinity for free ribosomal 30S subunits but not for 70S ribosomes. The chain is Ribosome maturation factor RimM from Parafrankia sp. (strain EAN1pec).